The following is a 702-amino-acid chain: Phosphoglycerol transferase I (702 aa).

3 helical membrane passes run 2–22 (HWMLLVSLLLLLWLLVASPRL), 71–91 (FSGYIAVFVGMLLLSLSPLLL), and 103–123 (GGAVFAGFVGMLLVGIAASPL).

This sequence belongs to the OpgB family.

The protein resides in the cell inner membrane. It carries out the reaction a phosphatidylglycerol + a membrane-derived-oligosaccharide D-glucose = a 1,2-diacyl-sn-glycerol + a membrane-derived-oligosaccharide 6-(glycerophospho)-D-glucose.. Its pathway is glycan metabolism; osmoregulated periplasmic glucan (OPG) biosynthesis. Functionally, transfers a phosphoglycerol residue from phosphatidylglycerol to the membrane-bound nascent glucan backbones. This is Phosphoglycerol transferase I from Xanthomonas euvesicatoria pv. vesicatoria (strain 85-10) (Xanthomonas campestris pv. vesicatoria).